A 141-amino-acid chain; its full sequence is Large ribosomal subunit protein uL11 (141 aa).

This sequence belongs to the universal ribosomal protein uL11 family. In terms of assembly, part of the ribosomal stalk of the 50S ribosomal subunit. Interacts with L10 and the large rRNA to form the base of the stalk. L10 forms an elongated spine to which L12 dimers bind in a sequential fashion forming a multimeric L10(L12)X complex. One or more lysine residues are methylated.

Functionally, forms part of the ribosomal stalk which helps the ribosome interact with GTP-bound translation factors. In Streptococcus gordonii (strain Challis / ATCC 35105 / BCRC 15272 / CH1 / DL1 / V288), this protein is Large ribosomal subunit protein uL11.